The sequence spans 455 residues: Ammonium transporter Rh type B (455 aa).

Residues 1-10 (MARIPRHRRL) are Cytoplasmic-facing. The helical transmembrane segment at 11-31 (VLPLLCLLFQGATSLLFAIFV) threads the bilayer. The Extracellular segment spans residues 32 to 58 (RYNHETDAALWHWGNHSNVDNEFYFRY). N-linked (GlcNAc...) asparagine glycosylation occurs at asparagine 46. The chain crosses the membrane as a helical span at residues 59–79 (PSFQDVHVMVFVGFGFLMVFL). At 80–83 (QRYG) the chain is on the cytoplasmic side. The helical transmembrane segment at 84–104 (FSSVGFTFLVATFTLQWATLL) threads the bilayer. Residues 105 to 121 (QGFLHSFHGGHIHIGVE) are Extracellular-facing. Residues 122-142 (SLINADFCAGAVLISFGAVLG) form a helical membrane-spanning segment. The Cytoplasmic segment spans residues 143 to 148 (KTGPAQ). A helical membrane pass occupies residues 149-169 (LLLMALLEAVLFSVNEFILLS). The Extracellular segment spans residues 170 to 176 (LLGVRDA). A helical membrane pass occupies residues 177 to 197 (GGSMTIHTFGAYFGLFLSRVL). Topologically, residues 198 to 216 (YRSQLEKSRHRQTSVYNSD) are cytoplasmic. The helical transmembrane segment at 217–237 (LFAMIGTIFLWVFWPSFNSAP) threads the bilayer. Residues 238-247 (TALGDGQHRT) lie on the Extracellular side of the membrane. A helical membrane pass occupies residues 248–270 (VVNTYYSLTASTLSTFALSALVS). The Cytoplasmic portion of the chain corresponds to 271 to 274 (GDGR). A helical membrane pass occupies residues 275 to 295 (LDMVHIQNAALAGGVVVGTAS). Residue glutamate 296 is a topological domain, extracellular. Residues 297 to 317 (MMLTPFGALAAGFLAGTVSTL) form a helical membrane-spanning segment. Over 318-340 (GYKFFTPILESRFKLQDTCGVHN) the chain is Cytoplasmic. A helical transmembrane segment spans residues 341–361 (LHGMPGLLGAILGVLVAALAT). Over 362 to 390 (HEAYGDGLQTVFPLIAKGQRSATSQAMYQ) the chain is Extracellular. A helical membrane pass occupies residues 391–411 (LFGMFVTLVFASVGGSLGGLL). At 412 to 455 (LKLPFLDSPPDSQCFEDQVYWEVPGEQEAETQRPLRTEEPDTQA) the chain is on the cytoplasmic side. The segment at 413-421 (KLPFLDSPP) is interaction with ANK3.

The protein belongs to the ammonium transporter (TC 2.A.49) family. Rh subfamily. As to quaternary structure, interacts (via C-terminus) with ANK2 and ANK3; required for targeting to the basolateral membrane. Post-translationally, N-glycosylated. As to expression, expressed in kidney by connecting segments and collecting tubules (at protein level).

The protein localises to the basolateral cell membrane. It localises to the cytoplasmic vesicle membrane. The catalysed reaction is NH4(+)(in) = NH4(+)(out). It carries out the reaction methylamine(out) = methylamine(in). The enzyme catalyses CO2(out) = CO2(in). In terms of biological role, ammonium transporter involved in the maintenance of acid-base homeostasis. Transports ammonium and its related derivative methylammonium across the basolateral plasma membrane of epithelial cells likely contributing to renal transepithelial ammonia transport and ammonia metabolism. May transport either NH4(+) or NH3 ammonia species predominantly mediating an electrogenic NH4(+) transport. May act as a CO2 channel providing for renal acid secretion. In Rattus norvegicus (Rat), this protein is Ammonium transporter Rh type B (Rhbg).